We begin with the raw amino-acid sequence, 648 residues long: PTS system N-acetylglucosamine-specific EIICBA component (648 aa).

The residue at position 1 (M1) is an N-formylmethionine. Residues 1-371 form the PTS EIIC type-1 domain; sequence MNILGFFQRL…FNLKTPGRED (371 aa). Transmembrane regions (helical) follow at residues 16 to 36, 38 to 58, 70 to 90, 92 to 112, 132 to 152, 159 to 179, 192 to 212, 232 to 252, 260 to 280, 282 to 302, 303 to 323, and 339 to 359; these read LPIA…PDLL, VAFI…IFAI, GAAA…MVTI, PEIN…GAAY, FVPI…GYVW, IHAG…IFGF, VLNT…GTVF, GFFP…YFAA, VGGM…TEPL, FLFM…TGIS, LFVA…GAID, and MLLV…SLVI. The region spanning 390 to 472 is the PTS EIIB type-1 domain; the sequence is TQLATNYIAA…KKVVARGPVA (83 aa). The Phosphocysteine intermediate; for EIIB activity role is filled by C412. C412 bears the Phosphocysteine; by EIIA mark. The PTS EIIA type-1 domain maps to 517–621; sequence DEAFASKAVG…SMISPVVCSN (105 aa). 2 residues coordinate Zn(2+): H554 and H569. Catalysis depends on H569, which acts as the Tele-phosphohistidine intermediate; for EIIA activity. Phosphohistidine; by HPr is present on H569.

Zn(2+) serves as cofactor. In terms of processing, 60% of isolated protein was N-formylated.

Its subcellular location is the cell inner membrane. It catalyses the reaction N(pros)-phospho-L-histidyl-[protein] + N-acetyl-D-glucosamine(out) = N-acetyl-D-glucosamine 6-phosphate(in) + L-histidyl-[protein]. With respect to regulation, P-chloromercuribenzoate inhibits the accumulation of both N-acetyl-D-glucosamine and antibiotic streptozotocin (2-deoxy-2-(3-methyl-3-nitrosoureido)-D-glucopyranose). N-acetyl-D-glucosamine is a competitive inhibitor for the uptake of streptozotocin. Its function is as follows. The phosphoenolpyruvate-dependent sugar phosphotransferase system (sugar PTS), a major carbohydrate active transport system, catalyzes the phosphorylation of incoming sugar substrates concomitantly with their translocation across the cell membrane. This system is involved in N-acetylglucosamine transport. It can also transport and phosphorylate the antibiotic streptozotocin. Could play a significant role in the recycling of peptidoglycan. In Escherichia coli (strain K12), this protein is PTS system N-acetylglucosamine-specific EIICBA component.